A 270-amino-acid polypeptide reads, in one-letter code: 3-phenylpropionate-dihydrodiol/cinnamic acid-dihydrodiol dehydrogenase (270 aa).

NAD(+) is bound at residue 10–34 (FITGGGSGLGLALVERFIEEGAQVA). Residue serine 143 coordinates substrate. Residue tyrosine 156 is the Proton acceptor of the active site.

This sequence belongs to the short-chain dehydrogenases/reductases (SDR) family.

It catalyses the reaction 3-(cis-5,6-dihydroxycyclohexa-1,3-dien-1-yl)propanoate + NAD(+) = 3-(2,3-dihydroxyphenyl)propanoate + NADH + H(+). It carries out the reaction (2E)-3-(cis-5,6-dihydroxycyclohexa-1,3-dien-1-yl)prop-2-enoate + NAD(+) = (2E)-3-(2,3-dihydroxyphenyl)prop-2-enoate + NADH + H(+). It participates in aromatic compound metabolism; 3-phenylpropanoate degradation. In terms of biological role, converts 3-phenylpropionate-dihydrodiol (PP-dihydrodiol) and cinnamic acid-dihydrodiol (CI-dihydrodiol) into 3-(2,3-dihydroxylphenyl)propanoic acid (DHPP) and 2,3-dihydroxicinnamic acid (DHCI), respectively. This chain is 3-phenylpropionate-dihydrodiol/cinnamic acid-dihydrodiol dehydrogenase, found in Escherichia coli (strain K12 / MC4100 / BW2952).